The chain runs to 409 residues: S-adenosylmethionine synthase (409 aa).

Glycine 141 to aspartate 146 lines the ATP pocket.

Belongs to the AdoMet synthase 2 family. It depends on Mg(2+) as a cofactor.

It catalyses the reaction L-methionine + ATP + H2O = S-adenosyl-L-methionine + phosphate + diphosphate. Its pathway is amino-acid biosynthesis; S-adenosyl-L-methionine biosynthesis; S-adenosyl-L-methionine from L-methionine: step 1/1. Its function is as follows. Catalyzes the formation of S-adenosylmethionine from methionine and ATP. The protein is S-adenosylmethionine synthase of Hyperthermus butylicus (strain DSM 5456 / JCM 9403 / PLM1-5).